The sequence spans 167 residues: NAD(P)H-quinone oxidoreductase subunit I, chloroplastic (167 aa).

2 consecutive 4Fe-4S ferredoxin-type domains span residues 55–84 (GRIH…VDWK) and 95–124 (LNYS…MTEE). 8 residues coordinate [4Fe-4S] cluster: Cys-64, Cys-67, Cys-70, Cys-74, Cys-104, Cys-107, Cys-110, and Cys-114.

This sequence belongs to the complex I 23 kDa subunit family. As to quaternary structure, NDH is composed of at least 16 different subunits, 5 of which are encoded in the nucleus. The cofactor is [4Fe-4S] cluster.

Its subcellular location is the plastid. The protein resides in the chloroplast thylakoid membrane. The enzyme catalyses a plastoquinone + NADH + (n+1) H(+)(in) = a plastoquinol + NAD(+) + n H(+)(out). It carries out the reaction a plastoquinone + NADPH + (n+1) H(+)(in) = a plastoquinol + NADP(+) + n H(+)(out). Its function is as follows. NDH shuttles electrons from NAD(P)H:plastoquinone, via FMN and iron-sulfur (Fe-S) centers, to quinones in the photosynthetic chain and possibly in a chloroplast respiratory chain. The immediate electron acceptor for the enzyme in this species is believed to be plastoquinone. Couples the redox reaction to proton translocation, and thus conserves the redox energy in a proton gradient. This chain is NAD(P)H-quinone oxidoreductase subunit I, chloroplastic, found in Atropa belladonna (Belladonna).